The sequence spans 111 residues: Iron-sulfur cluster assembly protein CyaY (111 aa).

The protein belongs to the frataxin family.

Functionally, involved in iron-sulfur (Fe-S) cluster assembly. May act as a regulator of Fe-S biogenesis. The chain is Iron-sulfur cluster assembly protein CyaY from Cupriavidus necator (strain ATCC 17699 / DSM 428 / KCTC 22496 / NCIMB 10442 / H16 / Stanier 337) (Ralstonia eutropha).